A 151-amino-acid polypeptide reads, in one-letter code: Transcriptional repressor NrdR (151 aa).

The segment at 3 to 34 (CPFCHNDQSRVIDSRVIDSGSAIRRRRECTQC) is a zinc-finger region. The ATP-cone domain maps to 46–136 (LLVVKRNGLT…VYKSFESADD (91 aa)).

It belongs to the NrdR family. Requires Zn(2+) as cofactor.

Functionally, negatively regulates transcription of bacterial ribonucleotide reductase nrd genes and operons by binding to NrdR-boxes. In Corynebacterium diphtheriae (strain ATCC 700971 / NCTC 13129 / Biotype gravis), this protein is Transcriptional repressor NrdR.